Reading from the N-terminus, the 73-residue chain is Large ribosomal subunit protein bL31 (73 aa).

The protein belongs to the bacterial ribosomal protein bL31 family. Type A subfamily. Part of the 50S ribosomal subunit.

Binds the 23S rRNA. This chain is Large ribosomal subunit protein bL31, found in Bartonella tribocorum (strain CIP 105476 / IBS 506).